The following is a 661-amino-acid chain: UvrABC system protein B (661 aa).

The region spanning 25-178 (EGILKGEKFQ…DEVIRDLIRM (154 aa)) is the Helicase ATP-binding domain. 38–45 (GVTGSGKT) provides a ligand contact to ATP. A Beta-hairpin motif is present at residues 91 to 114 (YYDYYQPEAYIPETDTYIEKDSSI). One can recognise a Helicase C-terminal domain in the interval 429–591 (QIDHLIGEIR…IVPQTVRKGI (163 aa)). The UVR domain maps to 625 to 660 (EEYIKELEQEMKKLAIELEFEKAAKVRDKIFELKKL).

This sequence belongs to the UvrB family. Forms a heterotetramer with UvrA during the search for lesions. Interacts with UvrC in an incision complex.

Its subcellular location is the cytoplasm. The UvrABC repair system catalyzes the recognition and processing of DNA lesions. A damage recognition complex composed of 2 UvrA and 2 UvrB subunits scans DNA for abnormalities. Upon binding of the UvrA(2)B(2) complex to a putative damaged site, the DNA wraps around one UvrB monomer. DNA wrap is dependent on ATP binding by UvrB and probably causes local melting of the DNA helix, facilitating insertion of UvrB beta-hairpin between the DNA strands. Then UvrB probes one DNA strand for the presence of a lesion. If a lesion is found the UvrA subunits dissociate and the UvrB-DNA preincision complex is formed. This complex is subsequently bound by UvrC and the second UvrB is released. If no lesion is found, the DNA wraps around the other UvrB subunit that will check the other stand for damage. The polypeptide is UvrABC system protein B (Caldicellulosiruptor bescii (strain ATCC BAA-1888 / DSM 6725 / KCTC 15123 / Z-1320) (Anaerocellum thermophilum)).